Consider the following 481-residue polypeptide: Metalloprotease TldD (481 aa).

It belongs to the peptidase U62 family.

Its function is as follows. Metalloprotease involved in CcdA degradation. Suppresses the inhibitory activity of the carbon storage regulator (CsrA). This is Metalloprotease TldD (tldD) from Escherichia coli (strain K12).